The following is a 433-amino-acid chain: Signal recognition particle 54 kDa protein (433 aa).

Residues 106–113 (GVEGSGKT), 186–190 (DTAGR), and 244–247 (TKMD) each bind GTP.

Belongs to the GTP-binding SRP family. SRP54 subfamily. As to quaternary structure, part of the signal recognition particle protein translocation system, which is composed of SRP and FtsY. Archaeal SRP consists of a 7S RNA molecule of 300 nucleotides and two protein subunits: SRP54 and SRP19.

Its subcellular location is the cytoplasm. The enzyme catalyses GTP + H2O = GDP + phosphate + H(+). Functionally, involved in targeting and insertion of nascent membrane proteins into the cytoplasmic membrane. Binds to the hydrophobic signal sequence of the ribosome-nascent chain (RNC) as it emerges from the ribosomes. The SRP-RNC complex is then targeted to the cytoplasmic membrane where it interacts with the SRP receptor FtsY. The polypeptide is Signal recognition particle 54 kDa protein (Pyrobaculum islandicum (strain DSM 4184 / JCM 9189 / GEO3)).